A 600-amino-acid polypeptide reads, in one-letter code: ATP-dependent lipid A-core flippase (600 aa).

6 consecutive transmembrane segments (helical) span residues 28 to 48 (TLSILGLIVYGLVDAAFIAFI), 80 to 100 (VMLMAPLVVIGMFTLRGVANF), 159 to 179 (ALISIVRDSITVIGMLALMFF), 182 to 202 (WKLSLCILVIGPLMGVVISIV), 267 to 287 (VSQPVIMIIGSFALAFVLYAA), and 295 to 315 (ELTAGTFAAILGAMLAMLQPI). The ABC transmembrane type-1 domain maps to 29–327 (LSILGLIVYG…LTRVNAEFQR (299 aa)). One can recognise an ABC transporter domain in the interval 359-596 (LRFDNVSFSY…KGAYAGLYQM (238 aa)). 393 to 400 (GRSGSGKS) is an ATP binding site.

It belongs to the ABC transporter superfamily. Lipid exporter (TC 3.A.1.106) family. As to quaternary structure, homodimer.

Its subcellular location is the cell inner membrane. It carries out the reaction ATP + H2O + lipid A-core oligosaccharideSide 1 = ADP + phosphate + lipid A-core oligosaccharideSide 2.. Its function is as follows. Involved in lipopolysaccharide (LPS) biosynthesis. Translocates lipid A-core from the inner to the outer leaflet of the inner membrane. Transmembrane domains (TMD) form a pore in the inner membrane and the ATP-binding domain (NBD) is responsible for energy generation. The protein is ATP-dependent lipid A-core flippase of Shewanella denitrificans (strain OS217 / ATCC BAA-1090 / DSM 15013).